The following is a 116-amino-acid chain: MTNKIILALEAEQMTKEIPTFAPGDTIVVQVKVKEGDRARLQAFEGVVIAKRNRGVNSAFTVRKISNGVGVERTFQTYSPQIDSMAVKRRGDVRKAKLYYLRDLSGKAARIKEKLS.

This sequence belongs to the bacterial ribosomal protein bL19 family.

In terms of biological role, this protein is located at the 30S-50S ribosomal subunit interface and may play a role in the structure and function of the aminoacyl-tRNA binding site. The protein is Large ribosomal subunit protein bL19 of Pseudomonas savastanoi pv. phaseolicola (strain 1448A / Race 6) (Pseudomonas syringae pv. phaseolicola (strain 1448A / Race 6)).